The sequence spans 195 residues: SPI-2 type 3 secretion system translocon protein SctB (195 aa).

Positions 44 to 80 form a coiled coil; that stretch reads KLMELAKKLRDIMRSYNVEKQRLAWELQVNVLQTQMK. Transmembrane regions (helical) follow at residues 90–110, 115–135, and 170–190; these read MITA…GAVG, LIAG…GAGV, and EIMQ…AEIL.

The protein belongs to the SctB/EspB family. In terms of assembly, the core secretion machinery of the T3SS is composed of approximately 20 different proteins, including cytoplasmic components, a base, an export apparatus and a needle. This subunit is involved in the formation of a pore, called the translocon, in host membrane. May form a complex with SseB and SseC/SctE2. SseB is required for correct localization of SseD/SctB2 on the bacterial cell surface. Binds to the chaperone SseA.

It localises to the secreted. The protein resides in the cell surface. It is found in the host membrane. In terms of biological role, component of the type III secretion system 2 (SPI-2 T3SS), also called injectisome, which is used to inject bacterial effector proteins into eukaryotic host cells. SseC/SctE2 and SseD/SctB2 are inserted into the host membrane where they form a pore and allow the translocation of effector proteins into the cytosol of target cells. Required for the translocation of SPI-2 effector proteins. Required for systemic Salmonella infection of the mouse. Essential for SpvB-induced actin depolymerization in the host cell cytoplasm. In Salmonella typhimurium (strain LT2 / SGSC1412 / ATCC 700720), this protein is SPI-2 type 3 secretion system translocon protein SctB.